A 109-amino-acid polypeptide reads, in one-letter code: FK506-binding protein (109 aa).

Residues 20–108 (GKEITVHYTG…IFEVELLKVY (89 aa)) form the PPIase FKBP-type domain.

Belongs to the FKBP-type PPIase family.

The enzyme catalyses [protein]-peptidylproline (omega=180) = [protein]-peptidylproline (omega=0). With respect to regulation, inhibited by FK506. In terms of biological role, PPIases accelerate the folding of proteins. The polypeptide is FK506-binding protein (fbp) (Neisseria meningitidis serogroup B (strain ATCC BAA-335 / MC58)).